The following is a 172-amino-acid chain: Small ribosomal subunit protein uS5 (172 aa).

Residues 17–80 (MREKMIAVNR…EEARRKMIKV (64 aa)) form the S5 DRBM domain.

It belongs to the universal ribosomal protein uS5 family. Part of the 30S ribosomal subunit. Contacts proteins S4 and S8.

Its function is as follows. With S4 and S12 plays an important role in translational accuracy. Located at the back of the 30S subunit body where it stabilizes the conformation of the head with respect to the body. In Janthinobacterium sp. (strain Marseille) (Minibacterium massiliensis), this protein is Small ribosomal subunit protein uS5.